An 85-amino-acid chain; its full sequence is Putative N.vectensis toxin 1 9 (85 aa).

Positions 1-20 (MASFKIVIVCLALLVAVASA) are cleaved as a signal peptide. Positions 21 to 36 (RRRDMMSDDELDYHFS) are excised as a propeptide. 3 disulfides stabilise this stretch: C42–C82, C44–C72, and C65–C83.

It belongs to the sea anemone sodium channel inhibitory toxin family. Type II subfamily. Expressed in ectodermal glands and in clumps outside of the extodermal layer. Is not expressed in nematocytes. In adult female tissues, shows similar expression levels in mesenteries (gametes-producing tissue), tentacles, pharynx and physa.

It is found in the secreted. Binds to site 3 of voltage-gated sodium channels and inhibits the inactivation process. Is highly active on DmNav1/TipE (drosophila) and is only extremely weakly active on rat Nav1.4-beta-1/SCN4A-SCN1B, and on human Nav1.5-beta-1/SCN5A-beta-1. This reveals high specificity for arthropod over mammalian channels. In vivo, when released into the medium, this recombinant toxin induces impaired swimming, paralysis and death of the crustacean A.nauplii within several hours. Also causes paralysis of cherry shrimps immediately after injection at very low doses. Its effect on zebrafish (D.rerio) larvae is also rapid, since it induces tail twitching accompanied by impaired swimming after 20 minutes and complete paralysis within 45 minutes. It has also been observed to cause death of zebrafish larvae within 1 hour. The chain is Putative N.vectensis toxin 1 9 from Nematostella vectensis (Starlet sea anemone).